Consider the following 122-residue polypeptide: MSKTYFTQDHEWLSVDGQMVTVGVTHYAQEQLGDLVFVDLPQSGTKLSKGEAAAVVESVKAASDVYSPLDGEVVEINEALTDNPELVNQKAETEGWLWKMTLQDETQLEELLDEDAYKALIG.

Residues 19–101 (MVTVGVTHYA…ETEGWLWKMT (83 aa)) form the Lipoyl-binding domain. Lys-60 carries the N6-lipoyllysine modification.

This sequence belongs to the GcvH family. The glycine cleavage system is composed of four proteins: P, T, L and H. The cofactor is (R)-lipoate.

In terms of biological role, the glycine cleavage system catalyzes the degradation of glycine. The H protein shuttles the methylamine group of glycine from the P protein to the T protein. The sequence is that of Glycine cleavage system H protein from Bartonella tribocorum (strain CIP 105476 / IBS 506).